Here is a 703-residue protein sequence, read N- to C-terminus: Collagen alpha-2(VIII) chain (703 aa).

The signal sequence occupies residues 1–28 (MLGTLTPLSSLLLLLLVLVLGCGPRASS). The nonhelical region (NC2) stretch occupies residues 29 to 76 (GGGAGGAAGYAPVKYIQPMQKGPVGPPFREGKGQYLEMPLPLLPMDLK). The tract at residues 70-544 (LLPMDLKGEP…AFDETGIAGL (475 aa)) is disordered. Residues 77 to 536 (GEPGPPGKPG…PGPPGAPGAF (460 aa)) are triple-helical region. A compositionally biased stretch (pro residues) spans 79–97 (PGPPGKPGPRGPPGPPGFP). A compositionally biased stretch (low complexity) spans 166 to 192 (PSGITIPGKPGAQGVPGPPGFQGEPGP). Positions 206–224 (GDNGVGQPGLPGAPGQGGA) are enriched in gly residues. 2 stretches are compositionally biased toward low complexity: residues 265-275 (EPGAVGPKGPP) and 285-297 (AAGL…PSGA). Residues 433–442 (GRPGGPGVAG) are compositionally biased toward gly residues. Low complexity-rich tracts occupy residues 444 to 462 (LGQK…RGPS) and 476 to 486 (PQGLPGLKGEP). Over residues 506 to 532 (TGPPGVPGSPGITGPPGPPGPPGPPGA) the composition is skewed to pro residues. The tract at residues 537–703 (DETGIAGLHL…SFSGFLLCPT (167 aa)) is nonhelical region (NC1). The 134-residue stretch at 570 to 703 (SAHATPAFTA…SFSGFLLCPT (134 aa)) folds into the C1q domain.

As to quaternary structure, homotrimers, or heterotrimers in association with alpha 2(VIII) type collagens. Four homotrimers can form a tetrahedron stabilized by central interacting C-terminal NC1 trimers. Proteolytically cleaved by neutrophil elastase, in vitro. Post-translationally, prolines at the third position of the tripeptide repeating unit (G-X-Y) are hydroxylated in some or all of the chains. As to expression, expressed primarily in the subendothelium of large blood vessels. Also expressed in arterioles and venules in muscle, heart, kidney, spleen, umbilical cord, liver and lung and is also found in connective tissue layers around hair follicles, around nerve bundles in muscle, in the dura of the optic nerve, in cornea and sclera, and in the perichondrium of cartilaginous tissues. In the kidney, expressed in mesangial cells, glomerular endothelial cells, and tubular epithelial cells. Also expressed in mast cells, and in astrocytes during the repair process. Expressed in Descemet's membrane.

The protein localises to the secreted. Its subcellular location is the extracellular space. It localises to the extracellular matrix. The protein resides in the basement membrane. In terms of biological role, macromolecular component of the subendothelium. Major component of the Descemet's membrane (basement membrane) of corneal endothelial cells. Also a component of the endothelia of blood vessels. Necessary for migration and proliferation of vascular smooth muscle cells and thus, has a potential role in the maintenance of vessel wall integrity and structure, in particular in atherogenesis. In Homo sapiens (Human), this protein is Collagen alpha-2(VIII) chain (COL8A2).